A 163-amino-acid polypeptide reads, in one-letter code: Ribosome maturation factor RimM (163 aa).

One can recognise a PRC barrel domain in the interval 94–162 (ADEYYYIDLI…DHLVIAADFI (69 aa)).

It belongs to the RimM family. Binds ribosomal protein uS19.

It localises to the cytoplasm. An accessory protein needed during the final step in the assembly of 30S ribosomal subunit, possibly for assembly of the head region. Essential for efficient processing of 16S rRNA. May be needed both before and after RbfA during the maturation of 16S rRNA. It has affinity for free ribosomal 30S subunits but not for 70S ribosomes. In Zymomonas mobilis subsp. mobilis (strain ATCC 31821 / ZM4 / CP4), this protein is Ribosome maturation factor RimM.